We begin with the raw amino-acid sequence, 362 residues long: Zinc transporter 9 (362 aa).

An N-terminal signal peptide occupies residues 1-21; sequence MAFDLKLTACLLLAVFSLAAA. Topologically, residues 22 to 42 are extracellular; that stretch reads ADCECQPSDEGHDAAKSRTLK. The chain crosses the membrane as a helical span at residues 43 to 63; sequence VIAIFCILVGSSAGCAIPSLG. Over 64–74 the chain is Cytoplasmic; that stretch reads RRFPALRPDTS. Residues 75–95 traverse the membrane as a helical segment; that stretch reads LFFALKAFAAGVILATAFVHI. The Extracellular segment spans residues 96–120; sequence LPVSFDKLGSPCLVDGPWRKYPFTG. The chain crosses the membrane as a helical span at residues 121–141; that stretch reads LVAMLAAVATLLLDTIATGYF. The Cytoplasmic portion of the chain corresponds to 142–207; that stretch reads LQRAQDSRGA…EDRAKLVRHR (66 aa). A helical transmembrane segment spans residues 208-228; that stretch reads VISQVFELGIIVHSIIIGISL. Over 229 to 239 the chain is Extracellular; that stretch reads GASESPSTIRP. Residues 240–260 form a helical membrane-spanning segment; sequence LVAALTFHQFFEGIGLGGCIV. Topologically, residues 261 to 269 are cytoplasmic; sequence QARFHLKSA. A helical transmembrane segment spans residues 270 to 290; the sequence is VTMAIFFSLTTPVGIMIGIGI. Residues 291–301 are Extracellular-facing; it reads SSAYNENSPTA. The helical transmembrane segment at 302–322 threads the bilayer; it reads LIVEGILDAAAAGILNYMALV. Over 323–341 the chain is Cytoplasmic; sequence DLLAEDFMNPRVRKSGRLQ. A helical membrane pass occupies residues 342–362; the sequence is LIISILLLVGIALMSLLGIWA.

Belongs to the ZIP transporter (TC 2.A.5) family.

It is found in the cell membrane. Its function is as follows. Zinc transporter that may be involved in zinc uptake from the rhizosphere. The chain is Zinc transporter 9 (ZIP9) from Oryza sativa subsp. japonica (Rice).